The following is a 373-amino-acid chain: Glutamine synthetase (373 aa).

Ala-2 is modified (N-acetylalanine). The interval 2–25 (ATSASSHLNKGIKQMYMNLPQGEK) is required for glutamine-induced ubiquitination by CRL4(CRBN) and proteasomal degradation. Residues Lys-11 and Lys-14 each carry the N6-acetyllysine modification. Positions 24–106 (EKIQLMYIWV…VFCEVFKYNR (83 aa)) constitute a GS beta-grasp domain. A Phosphotyrosine modification is found at Tyr-104. The GS catalytic domain maps to 113–373 (LRHSCKRIMD…TGDEPFQYKN (261 aa)). Glu-134 is a binding site for ATP. Residues Glu-134, Glu-136, Glu-196, and Glu-203 each coordinate Mn(2+). 203-208 (EFQIGP) is a binding site for ATP. 246 to 247 (NW) is a binding site for L-glutamate. His-253 is a Mn(2+) binding site. ATP is bound by residues 255–257 (NFS), Arg-319, and Arg-324. Arg-319 serves as a coordination point for L-glutamate. 336-338 (YFE) lines the ADP pocket. Position 338 (Glu-338) interacts with Mn(2+). Arg-340 is an L-glutamate binding site. Ser-343 carries the phosphoserine modification.

It belongs to the glutamine synthetase family. In terms of assembly, decamer; composed of two pentamers. Interacts with PALMD. Interacts with RHOJ. Interacts with BEST2; this interaction tethers a fraction of GLUL to the membrane, causing a decrease of cytosolic glutamine synthase (GS) activity and inhibits the chloride channel activity of BEST2 by affecting the gating at the aperture in the absence of intracellular glutamate. Requires Mg(2+) as cofactor. Mn(2+) serves as cofactor. Palmitoylated; undergoes autopalmitoylation. In terms of processing, acetylated by EP300/p300; acetylation is stimulated by increased glutamine levels and promotes ubiquitin-mediated proteasomal degradation. Post-translationally, ubiquitinated by ZNRF1. Ubiquitinated by the DCX (DDB1-CUL4-X-box) E3 ubiquitin-protein ligase complex called CRL4(CRBN), leading to proteasomal degradation. In terms of tissue distribution, in the adult liver, expression is restricted to a small population of hepatocytes which form only a small rim of one to three hepatocytes around the central veins. Expressed in lung microvascular endothelial cells.

The protein resides in the cytoplasm. The protein localises to the cytosol. Its subcellular location is the microsome. It localises to the mitochondrion. It is found in the cell membrane. The enzyme catalyses L-glutamate + NH4(+) + ATP = L-glutamine + ADP + phosphate + H(+). It catalyses the reaction L-cysteinyl-[protein] + hexadecanoyl-CoA = S-hexadecanoyl-L-cysteinyl-[protein] + CoA. Glutamine synthetase activity is inhibited by methionine sulfoximine (MSO). Functionally, glutamine synthetase that catalyzes the ATP-dependent conversion of glutamate and ammonia to glutamine. Its role depends on tissue localization: in the brain, it regulates the levels of toxic ammonia and converts neurotoxic glutamate to harmless glutamine, whereas in the liver, it is one of the enzymes responsible for the removal of ammonia. Plays a key role in ammonium detoxification during erythropoiesis: the glutamine synthetase activity is required to remove ammonium generated by porphobilinogen deaminase (HMBS) during heme biosynthesis to prevent ammonium accumulation and oxidative stress. Essential for proliferation of fetal skin fibroblasts. Independently of its glutamine synthetase activity, required for endothelial cell migration during vascular development. Involved in angiogenesis by regulating membrane localization and activation of the GTPase RHOJ, possibly by promoting RHOJ palmitoylation. May act as a palmitoyltransferase for RHOJ: able to autopalmitoylate and then transfer the palmitoyl group to RHOJ. Plays a role in ribosomal 40S subunit biogenesis. Through the interaction with BEST2, inhibits BEST2 channel activity by affecting the gating at the aperture in the absence of intracellular L-glutamate, but sensitizes BEST2 to intracellular L-glutamate, which promotes the opening of BEST2 and thus relieves its inhibitory effect on BEST2. The polypeptide is Glutamine synthetase (Rattus norvegicus (Rat)).